A 114-amino-acid chain; its full sequence is Gas vesicle protein J (114 aa).

Residues 63 to 114 (PTGTDMERVEEAAGISPDESRSLDTRSESEQMDELPGEAGASVSNTAPQEEE) form a disordered region. The segment covering 80-91 (DESRSLDTRSES) has biased composition (basic and acidic residues). A compositionally biased stretch (polar residues) spans 104-114 (SVSNTAPQEEE).

The protein belongs to the gas vesicle GvpA family. GvpF to GvpM interact with each other in vitro, and may form multi-subunit complex(es). Interacts with GvpA.

The protein localises to the gas vesicle. Its function is as follows. A minor component of the gas vesicle, proteins GvpF to GvpM might be involved in nucleating gas vesicle formation. Gas vesicles are hollow, gas filled proteinaceous nanostructures found in some microorganisms. They allow positioning of halobacteria at the optimal depth for growth in the poorly aerated, shallow brine pools of their habitat. Expression of a 9.5 kb mc-vac DNA fragment containing 2 divergently transcribed regions (gvpD-gvpE-gvpF-gvpG-gvpH-gvpI-gvpJ-gvpK-gvpL-gvpM and gvpA-gvpC-gvpN-gvpO) allows H.volcanii to produce gas vesicles. The chain is Gas vesicle protein J from Haloferax mediterranei (strain ATCC 33500 / DSM 1411 / JCM 8866 / NBRC 14739 / NCIMB 2177 / R-4) (Halobacterium mediterranei).